The chain runs to 311 residues: MTDRTTDPVPAEPAPVRHPTARLIDGKAFAANLTQTIARDVQSFHDRYRVTPGLAVVLVGNDPASEVYVRNKALQTHRAGMRSFMHMLPATTSQAELLALIGRLNADPEIHGILVQLPLPAGLDPVAVTNAILPDKDVDGLGEVNAGRLALGQPGIVPCTPLGCLMLLKSELGDLRGLHAVIIGASNLVGRPMARLLLAEGCTVTVGHIDTRDPAALARQGDILVVATGCHGLVRGDWIKPGAAVIDVGITRISLPSGKTRLVGDVAFDEAVTRAGCITPVPGGVGPMTIACLLNNTLAAARRIVGATDAA.

Residues G184–S186, I209, and I250 contribute to the NADP(+) site.

The protein belongs to the tetrahydrofolate dehydrogenase/cyclohydrolase family. In terms of assembly, homodimer.

The enzyme catalyses (6R)-5,10-methylene-5,6,7,8-tetrahydrofolate + NADP(+) = (6R)-5,10-methenyltetrahydrofolate + NADPH. It carries out the reaction (6R)-5,10-methenyltetrahydrofolate + H2O = (6R)-10-formyltetrahydrofolate + H(+). Its pathway is one-carbon metabolism; tetrahydrofolate interconversion. Catalyzes the oxidation of 5,10-methylenetetrahydrofolate to 5,10-methenyltetrahydrofolate and then the hydrolysis of 5,10-methenyltetrahydrofolate to 10-formyltetrahydrofolate. The polypeptide is Bifunctional protein FolD (Gluconacetobacter diazotrophicus (strain ATCC 49037 / DSM 5601 / CCUG 37298 / CIP 103539 / LMG 7603 / PAl5)).